Consider the following 334-residue polypeptide: MSDAPSSSPDATASHWCYHCNKRVVVETLDDFVVCCECNKGFVESIQPTPAAYSSPAPPQPLSPDLNVEDSSIGSHFLQMLRLLAHAPSQRSPPRHLDVLSYEDDFFRLELNSRNEIDDDEDEDEDDGDEEEEDEEENLTVNDEEDEEDDLRRRNRFPLTTTQSRTGRNRILDWAEILMGIEDNSIEFRMESDRYAGNPADYIDDAAGYEALLQNLAEGDGGGGGGRRGAPPAAKSAIEALETFEVSSSEGEMVMVCAVCKDGMVMGETGKKLPCGHCYHGDCIVPWLGTRNSCPVCRFQLETDDAEYEEERKKRTSTVSDSAAASSSSSTSRY.

The interval 111-158 (LNSRNEIDDDEDEDEDDGDEEEEDEEENLTVNDEEDEEDDLRRRNRFP) is disordered. Acidic residues predominate over residues 117-149 (IDDDEDEDEDDGDEEEEDEEENLTVNDEEDEED). The RING-type; atypical zinc-finger motif lies at 257 to 298 (CAVCKDGMVMGETGKKLPCGHCYHGDCIVPWLGTRNSCPVCR). The disordered stretch occupies residues 307–334 (EYEEERKKRTSTVSDSAAASSSSSTSRY). Low complexity predominate over residues 317–334 (STVSDSAAASSSSSTSRY).

In terms of assembly, interacts with the RING finger of COP1. Interacts with UBC8 through its N-terminal region. In terms of tissue distribution, expressed in both light- and dark-grown seedlings.

Its subcellular location is the cytoplasm. The enzyme catalyses S-ubiquitinyl-[E2 ubiquitin-conjugating enzyme]-L-cysteine + [acceptor protein]-L-lysine = [E2 ubiquitin-conjugating enzyme]-L-cysteine + N(6)-ubiquitinyl-[acceptor protein]-L-lysine.. The protein operates within protein modification; protein ubiquitination. Functionally, E3 ubiquitin-protein ligase that mediates ubiquitination and subsequent proteasomal degradation of target proteins. Probably forms a minimal ubiquitin ligase complex in cooperation with the E2 enzyme UBC8. Its interaction with COP1 suggests that it may participate in proteasome-mediated degradation of HY5 in vivo. In Arabidopsis thaliana (Mouse-ear cress), this protein is E3 ubiquitin-protein ligase CIP8 (CIP8).